The sequence spans 147 residues: Large ribosomal subunit protein bL9 (147 aa).

This sequence belongs to the bacterial ribosomal protein bL9 family.

Its function is as follows. Binds to the 23S rRNA. The polypeptide is Large ribosomal subunit protein bL9 (Campylobacter lari (strain RM2100 / D67 / ATCC BAA-1060)).